The sequence spans 644 residues: Core protein VP4 (644 aa).

This sequence belongs to the orbivirus VP4 family.

It localises to the virion. In terms of biological role, the VP4 protein is one of the five proteins (with VP1, VP3, VP6 and VP7) which form the inner capsid of the virus. This chain is Core protein VP4 (Segment-4), found in Bluetongue virus 11 (isolate USA) (BTV 11).